A 488-amino-acid polypeptide reads, in one-letter code: Ankyrin repeat domain-containing protein 13C (488 aa).

The disordered stretch occupies residues 1–60 (MTGEKIRSVRKERKSGLDLLEPDEEPAATGPAKHRGSKIFSGGNHRISRSSSSPGDPDGA). Residues 41 to 59 (SGGNHRISRSSSSPGDPDG) are compositionally biased toward low complexity. ANK repeat units follow at residues 58–87 (DGAY…IAQK), 90–119 (HGNT…PVKV), and 123–152 (QGWS…QQSR).

The protein localises to the endoplasmic reticulum membrane. Functionally, acts as a molecular chaperone for G protein-coupled receptors, regulating their biogenesis and exit from the ER. The polypeptide is Ankyrin repeat domain-containing protein 13C (ankrd13c) (Danio rerio (Zebrafish)).